The primary structure comprises 32 residues: Protein YthB (32 aa).

The protein is Protein YthB of Escherichia coli (strain K12).